The following is a 228-amino-acid chain: Max-interacting protein 1 (228 aa).

Disordered regions lie at residues 30 to 76 and 160 to 228; these read YASS…NELE and SIGS…SFAS. Residues 43-56 are compositionally biased toward basic residues; it reads QHSKPPRRLSRAQK. A compositionally biased stretch (polar residues) spans 57 to 70; the sequence is HSSGSSNTSTANRS. A bHLH domain is found at 67-119; it reads ANRSTHNELEKNRRAHLRLCLERLKVLIPLGPDCTRHTTLGLLNKAKAHIKKL. Acidic residues predominate over residues 173–183; sequence EREEIEVDVES. A compositionally biased stretch (polar residues) spans 207–228; that stretch reads SLQSVGSDEGYSSASVKLSFAS.

In terms of assembly, efficient DNA binding requires dimerization with another bHLH protein. Binds DNA as a heterodimer with MAX. Interacts with SMC3. Interacts with RNF17.

The protein resides in the nucleus. Its function is as follows. Transcriptional repressor. MXI1 binds with MAX to form a sequence-specific DNA-binding protein complex which recognizes the core sequence 5'-CAC[GA]TG-3'. MXI1 thus antagonizes MYC transcriptional activity by competing for MAX. Isoform Short, which lacks a segment, has a much stronger suppressive potential and associates with a SIN3 homologous protein. This chain is Max-interacting protein 1 (Mxi1), found in Mus musculus (Mouse).